Here is a 61-residue protein sequence, read N- to C-terminus: Probradykinin-2 (61 aa).

The first 22 residues, 1-22, serve as a signal peptide directing secretion; sequence MSFLKKSLFLVLFLGLVSFSIC. The propeptide occupies 23–50; sequence EEEKRETEEEENEDEIEEQSEEKKRFEP. The tract at residues 24–61 is disordered; it reads EEKRETEEEENEDEIEEQSEEKKRFEPVPPGFTPFRQT. A compositionally biased stretch (acidic residues) spans 30 to 42; it reads EEEENEDEIEEQS. Pro52 is modified (4-hydroxyproline).

Belongs to the frog skin active peptide (FSAP) family. Bradykinin-related peptide subfamily. As to expression, expressed by the skin glands.

Its subcellular location is the secreted. May produce in vitro relaxation of rat arterial smooth muscle and constriction of intestinal smooth muscle. May target bradykinin receptors (BDKRB). The chain is Probradykinin-2 from Pithecopus azureus (Orange-legged monkey tree frog).